The chain runs to 591 residues: MSHKQFKSDGNIVTPYLLGLARSNPGLTVIKHDRVVFRTASAPNSGNPPKVSLVSGGGSGHEPTHAGFVGEGALDAIAAGAIFASPSTKQIYSAIKAVESPKGTLIIVKNYTGDIIHFGLAAERAKAAGMKVELVAVGDDVSVGKKKGSLVGRRGLGATVLVHKIAGAAASHGLELAEVAEVAQSVVDNSVTIAASLDHCTVPGHKPEAILGENEYEIGMGIHNESGTYKSSPLPSISELVSQMLPLLLDEDEDRSYVKFEPKEDVVLMVNNMGGMSNLELGYAAEVISEQLIDKYQIVPKRTITGAFITALNGPGFGITLMNASKAGGDILKYFDYPTTASGWNQMYHSAKDWEVLAKGQVPTAPSLKTLRNEKGSGVKADYDTFAKILLAGIAKINEVEPKVTWYDTIAGDGDCGTTLVSGGEALEEAIKNHTLRLEDAALGIEDIAYMVEDSMGGTSGGLYSIYLSALAQGVRDSGDKELTAETFKKASNVALDALYKYTRARPGYRTLIDALQPFVEALKAGKGPRAAAQAAYDGAEKTRKMDALVGRASYVAKEELRKLDSEGGLPDPGAVGLAALLDGFVTAAGY.

A DhaK domain is found at 8-344 (SDGNIVTPYL…FDYPTTASGW (337 aa)). A disordered region spans residues 40 to 59 (ASAPNSGNPPKVSLVSGGGS). Substrate contacts are provided by residues 58–61 (GSGH), K109, and D114. The active-site Tele-hemiaminal-histidine intermediate is H223. Positions 384–587 (DTFAKILLAG…LAALLDGFVT (204 aa)) constitute a DhaL domain. Residues 413-416 (DGDC), 459-460 (TS), 511-512 (TL), and 572-574 (DPG) contribute to the ATP site.

Belongs to the dihydroxyacetone kinase (DAK) family.

The enzyme catalyses dihydroxyacetone + ATP = dihydroxyacetone phosphate + ADP + H(+). It catalyses the reaction D-glyceraldehyde + ATP = D-glyceraldehyde 3-phosphate + ADP + H(+). The protein operates within polyol metabolism; glycerol fermentation; glycerone phosphate from glycerol (oxidative route): step 2/2. In terms of biological role, catalyzes both the phosphorylation of dihydroxyacetone and of glyceraldehyde. The protein is Dihydroxyacetone kinase 2 (DAK2) of Saccharomyces cerevisiae (strain ATCC 204508 / S288c) (Baker's yeast).